The sequence spans 175 residues: MMYTVFVMSVLFVVGFVGVSSKPSPVYGGLGLVASGGVGCGIVVSFGGSFLGLMVFLVYLGGMMVVFGYTTAMATDEYPEAWGSNIVVLGALVGGLLMEGAAVVYLFSGGGLELVGLDLGSLENWMVFGGEGEELIREDYVGGSSLYSYGCWFMVMSGWMLFISVFIVIEVTRGR.

5 helical membrane passes run 1 to 21 (MMYT…GVSS), 24 to 44 (SPVY…GIVV), 46 to 66 (FGGS…MMVV), 86 to 106 (IVVL…VVYL), and 149 to 169 (YGCW…FIVI).

Belongs to the complex I subunit 6 family. As to quaternary structure, core subunit of respiratory chain NADH dehydrogenase (Complex I) which is composed of 45 different subunits.

Its subcellular location is the mitochondrion inner membrane. The catalysed reaction is a ubiquinone + NADH + 5 H(+)(in) = a ubiquinol + NAD(+) + 4 H(+)(out). Its function is as follows. Core subunit of the mitochondrial membrane respiratory chain NADH dehydrogenase (Complex I) which catalyzes electron transfer from NADH through the respiratory chain, using ubiquinone as an electron acceptor. Essential for the catalytic activity and assembly of complex I. In Dugong dugon (Dugong), this protein is NADH-ubiquinone oxidoreductase chain 6 (MT-ND6).